The primary structure comprises 435 residues: Citrate synthase (435 aa).

Active-site residues include histidine 311 and aspartate 370.

Belongs to the citrate synthase family.

It carries out the reaction oxaloacetate + acetyl-CoA + H2O = citrate + CoA + H(+). It participates in carbohydrate metabolism; tricarboxylic acid cycle; isocitrate from oxaloacetate: step 1/2. The sequence is that of Citrate synthase (gltA) from Rickettsia slovaca (strain 13-B).